The chain runs to 772 residues: Nudix hydrolase 3 (772 aa).

The span at 1-14 shows a compositional bias: basic and acidic residues; that stretch reads MAEEHFDVLTKSGE. Residues 1-25 form a disordered region; the sequence is MAEEHFDVLTKSGEKTGVSKPRGEV. The region spanning 30-172 is the Nudix hydrolase domain; the sequence is DYHRAVHVWI…DPAYVPYDVN (143 aa). The short motif at 69 to 90 is the Nudix box element; that stretch reads GHISAGDTSLLSAQRELEEELG. Mg(2+) is bound by residues Glu-84 and Glu-88.

It belongs to the Nudix hydrolase family. Mg(2+) serves as cofactor. It depends on Mn(2+) as a cofactor. Expressed in roots, stems and, at lower level, leaves.

Probably mediates the hydrolysis of some nucleoside diphosphate derivatives. The sequence is that of Nudix hydrolase 3 (NUDT3) from Arabidopsis thaliana (Mouse-ear cress).